We begin with the raw amino-acid sequence, 548 residues long: Polynucleotide 5'-hydroxyl-kinase nol-9 (548 aa).

186–193 (GHKGAGKS) contributes to the ATP binding site.

This sequence belongs to the Clp1 family. NOL9/GRC3 subfamily.

The protein resides in the nucleus. It localises to the nucleolus. Polynucleotide 5'-kinase involved in rRNA processing. In Caenorhabditis briggsae, this protein is Polynucleotide 5'-hydroxyl-kinase nol-9 (nol-9).